Consider the following 503-residue polypeptide: Cobyric acid synthase (503 aa).

The GATase cobBQ-type domain occupies 260-453 (KIGVAAIYFP…FHALFDESSV (194 aa)). Residue Cys-341 is the Nucleophile of the active site. His-445 is a catalytic residue.

This sequence belongs to the CobB/CobQ family. CobQ subfamily.

Its pathway is cofactor biosynthesis; adenosylcobalamin biosynthesis. Catalyzes amidations at positions B, D, E, and G on adenosylcobyrinic A,C-diamide. NH(2) groups are provided by glutamine, and one molecule of ATP is hydrogenolyzed for each amidation. The chain is Cobyric acid synthase from Pelodictyon phaeoclathratiforme (strain DSM 5477 / BU-1).